The chain runs to 458 residues: Plant UBX domain-containing protein 2 (458 aa).

Residues 1–103 are disordered; it reads MDDVKDKLKG…APQDGFDPYG (103 aa). The span at 44–54 shows a compositional bias: polar residues; the sequence is PIQNRFNSSQA. Over residues 56-70 the composition is skewed to pro residues; it reads NPTPRPKPNPNPLPE. Polar residues predominate over residues 74 to 85; sequence SSSDQKISGSTR. The segment at 121 to 143 adopts a C2H2-type; atypical zinc-finger fold; the sequence is FECPICKNPFTSEEEVSVHVESC. The PUB domain occupies 181–248; the sequence is SSIDVLLRLF…EIWAVMDVPS (68 aa). In terms of domain architecture, UBX spans 349–433; that stretch reads KRYKRSMIRV…ELVPSALIRF (85 aa).

Interacts with CDC48A in vitro and co-fractionates with membrane-associated but not soluble CDC48A in vivo.

Its subcellular location is the membrane. Its function is as follows. Facilitates the interaction of SYP31 and CDC48A, thereby regulating an CDC48A membrane-associated function. Appears to act as a negative regulator mediating the powdery mildew-plant interaction. The chain is Plant UBX domain-containing protein 2 from Arabidopsis thaliana (Mouse-ear cress).